Consider the following 246-residue polypeptide: Ly6/PLAUR domain-containing protein 4 (246 aa).

The N-terminal stretch at 1-26 (MILQAWRSLQLLYLLEAISLLPCTEA) is a signal peptide. The N-linked (GlcNAc...) asparagine glycan is linked to Asn117. The 82-residue stretch at 142–223 (CPSCVGKHDQ…INVLDKSEAV (82 aa)) folds into the UPAR/Ly6 domain. A lipid anchor (GPI-anchor amidated alanine) is attached at Ala225. Residues 226–246 (GHCSQGISWSVLLCLLILLRD) constitute a propeptide, removed in mature form.

It localises to the cell membrane. The polypeptide is Ly6/PLAUR domain-containing protein 4 (Lypd4) (Mus musculus (Mouse)).